Consider the following 557-residue polypeptide: Warthog protein 4 (557 aa).

Positions 1-20 (MRFSLLALVLLSSSYKFTYG) are cleaved as a signal peptide. Residues 272–308 (QETNPQPPPPPGQQGGFVQPQGFQPQGGFQPQGFQPQ) are disordered. Positions 287 to 308 (GFVQPQGFQPQGGFQPQGFQPQ) are enriched in low complexity.

The protein belongs to the hedgehog family. Post-translationally, the C-terminal domain displays an autoproteolysis activity.

Its subcellular location is the secreted. It localises to the cell surface. The protein localises to the cell membrane. It is found in the extracellular space. Intercellular signal essential for a variety of patterning events during development. This Caenorhabditis elegans protein is Warthog protein 4 (wrt-4).